We begin with the raw amino-acid sequence, 419 residues long: UDP-N-acetylglucosamine 1-carboxyvinyltransferase (419 aa).

22-23 (KN) contacts phosphoenolpyruvate. Position 92 (Arg92) interacts with UDP-N-acetyl-alpha-D-glucosamine. The active-site Proton donor is the Cys116. Cys116 is subject to 2-(S-cysteinyl)pyruvic acid O-phosphothioketal. UDP-N-acetyl-alpha-D-glucosamine-binding residues include Asp306 and Ile328.

This sequence belongs to the EPSP synthase family. MurA subfamily.

It localises to the cytoplasm. The catalysed reaction is phosphoenolpyruvate + UDP-N-acetyl-alpha-D-glucosamine = UDP-N-acetyl-3-O-(1-carboxyvinyl)-alpha-D-glucosamine + phosphate. It functions in the pathway cell wall biogenesis; peptidoglycan biosynthesis. Cell wall formation. Adds enolpyruvyl to UDP-N-acetylglucosamine. This Pseudoalteromonas translucida (strain TAC 125) protein is UDP-N-acetylglucosamine 1-carboxyvinyltransferase.